The sequence spans 176 residues: Large ribosomal subunit protein uL10 (176 aa).

This sequence belongs to the universal ribosomal protein uL10 family. Part of the ribosomal stalk of the 50S ribosomal subunit. The N-terminus interacts with L11 and the large rRNA to form the base of the stalk. The C-terminus forms an elongated spine to which L12 dimers bind in a sequential fashion forming a multimeric L10(L12)X complex.

In terms of biological role, forms part of the ribosomal stalk, playing a central role in the interaction of the ribosome with GTP-bound translation factors. This chain is Large ribosomal subunit protein uL10 (rplJ), found in Streptomyces antibioticus.